We begin with the raw amino-acid sequence, 175 residues long: uncharacterized protein (175 aa).

Positions 1-10 (MSKKINNNKT) are enriched in polar residues. Residues 1–21 (MSKKINNNKTPRNKVKNNNVS) are disordered.

This is an uncharacterized protein from Ureaplasma parvum serovar 3 (strain ATCC 700970).